We begin with the raw amino-acid sequence, 509 residues long: Histidine--tRNA ligase, cytoplasmic (509 aa).

A2 is modified (N-acetylalanine). The WHEP-TRS domain maps to 3 to 59 (DRAALEDLVRVQGERVRGLKQQKASAEQIEEEVAKLLKLKAQLGPDEGKPKFVLKTP). S66 is modified (phosphoserine). L-histidine contacts are provided by residues 130-132 (DLT), R157, Q173, D177, R326, and 330-331 (YY). S356 carries the phosphoserine modification.

The protein belongs to the class-II aminoacyl-tRNA synthetase family. Homodimer.

Its subcellular location is the cytoplasm. It carries out the reaction tRNA(His) + L-histidine + ATP = L-histidyl-tRNA(His) + AMP + diphosphate + H(+). In terms of biological role, catalyzes the ATP-dependent ligation of histidine to the 3'-end of its cognate tRNA, via the formation of an aminoacyl-adenylate intermediate (His-AMP). Plays a role in axon guidance. The protein is Histidine--tRNA ligase, cytoplasmic (HARS1) of Bos taurus (Bovine).